The sequence spans 388 residues: tRNA (guanine(26)-N(2))-dimethyltransferase (388 aa).

A Trm1 methyltransferase domain is found at lysine 4 to isoleucine 383. S-adenosyl-L-methionine is bound by residues arginine 41, arginine 78, aspartate 94, and alanine 123. Cysteine 251, cysteine 254, cysteine 271, and cysteine 274 together coordinate Zn(2+).

The protein belongs to the class I-like SAM-binding methyltransferase superfamily. Trm1 family.

The enzyme catalyses guanosine(26) in tRNA + 2 S-adenosyl-L-methionine = N(2)-dimethylguanosine(26) in tRNA + 2 S-adenosyl-L-homocysteine + 2 H(+). In terms of biological role, dimethylates a single guanine residue at position 26 of a number of tRNAs using S-adenosyl-L-methionine as donor of the methyl groups. This is tRNA (guanine(26)-N(2))-dimethyltransferase from Methanosarcina barkeri (strain Fusaro / DSM 804).